A 751-amino-acid polypeptide reads, in one-letter code: ABC transporter G family member 22 (751 aa).

Residues 26 to 81 (ADIRSPHGSMDANGVPATAPAAVGGGGTLSRKSSRRLMGMSPGRSSGAGTHIRKSR) form a disordered region. Positions 157–403 (LKFRDVTYKV…FSSIGCSPLI (247 aa)) constitute an ABC transporter domain. Residue 197-204 (GPSGSGKT) participates in ATP binding. The 210-residue stretch at 498–707 (EQYCILFCRG…TYKLLLKVQY (210 aa)) folds into the ABC transmembrane type-2 domain. A run of 6 helical transmembrane segments spans residues 516-536 (FSWLRVTQVLSTAVILGLLWW), 552-572 (LLFFIAVFWGFFPVFTAIFAF), 602-622 (LPLDFILPSLFLLVVYFMTGL), 634-654 (LTVFLCIIAAQGLGLAIGAIL), 666-686 (VTVMTFMLAGGFFVKKVPVFI), and 722-742 (GLTEVAALVVMIFGYRLLAYL).

Belongs to the ABC transporter superfamily. ABCG family. Eye pigment precursor importer (TC 3.A.1.204) subfamily.

The protein resides in the membrane. This chain is ABC transporter G family member 22 (ABCG22), found in Arabidopsis thaliana (Mouse-ear cress).